Consider the following 219-residue polypeptide: 7-cyano-7-deazaguanine synthase (219 aa).

An ATP-binding site is contributed by 10–20; that stretch reads FSGGQDSTTCL. Residues Cys188, Cys197, Cys200, and Cys203 each contribute to the Zn(2+) site.

This sequence belongs to the QueC family. Homodimer. Requires Zn(2+) as cofactor.

The enzyme catalyses 7-carboxy-7-deazaguanine + NH4(+) + ATP = 7-cyano-7-deazaguanine + ADP + phosphate + H2O + H(+). It functions in the pathway purine metabolism; 7-cyano-7-deazaguanine biosynthesis. In terms of biological role, catalyzes the ATP-dependent conversion of 7-carboxy-7-deazaguanine (CDG) to 7-cyano-7-deazaguanine (preQ(0)). This chain is 7-cyano-7-deazaguanine synthase, found in Clostridium botulinum (strain Langeland / NCTC 10281 / Type F).